We begin with the raw amino-acid sequence, 372 residues long: Oxysterol-binding protein 3 (372 aa).

Positions 1–10 (MGKSDRKLTE) are enriched in basic and acidic residues. Residues 1-25 (MGKSDRKLTEENSIENGVKPGKLTE) are disordered.

This sequence belongs to the OSBP family.

The chain is Oxysterol-binding protein 3 (osbC) from Dictyostelium discoideum (Social amoeba).